Reading from the N-terminus, the 156-residue chain is Small ribosomal subunit protein uS7 (156 aa).

It belongs to the universal ribosomal protein uS7 family. In terms of assembly, part of the 30S ribosomal subunit. Contacts proteins S9 and S11.

One of the primary rRNA binding proteins, it binds directly to 16S rRNA where it nucleates assembly of the head domain of the 30S subunit. Is located at the subunit interface close to the decoding center, probably blocks exit of the E-site tRNA. The sequence is that of Small ribosomal subunit protein uS7 from Streptococcus thermophilus (strain CNRZ 1066).